An 86-amino-acid chain; its full sequence is High affinity immunoglobulin epsilon receptor subunit gamma (86 aa).

A signal peptide spans 1-18 (MIPAVVLLLLLLVEQAAA). Topologically, residues 19–23 (LGEPQ) are extracellular. Residues 24–44 (LCYILDAILFLYGIVLTLLYC) form a helical membrane-spanning segment. The Cytoplasmic segment spans residues 45–86 (RLKLQVRKAAIDSYEKSDGVYTGLSTRNQETYETLKHEKPPQ). The 29-residue stretch at 54–82 (AIDSYEKSDGVYTGLSTRNQETYETLKHE) folds into the ITAM domain. A Phosphotyrosine modification is found at tyrosine 65. A Phosphoserine modification is found at serine 69. Tyrosine 76 carries the post-translational modification Phosphotyrosine. Threonine 78 carries the post-translational modification Phosphothreonine.

It belongs to the CD3Z/FCER1G family. As to quaternary structure, igE Fc receptor is a tetramer of an alpha chain, a beta chain, and two disulfide linked gamma chains. Associates with FCGR1A; forms a functional signaling complex. The signaling subunit of immunoglobulin gamma (IgG) Fc receptor complex. As a homodimer or a heterodimer of CD247 and FCER1G, associates with the ligand binding subunit FCGR3A to form a functional receptor complex. Associates with CLEC6A. Interacts with CLEC4E. Interacts (via ITAM domain) with SYK (via SH2 domains); activates SYK, enabling integrin-mediated activation of neutrophils and macrophages. Interacts with common beta chain of interleukin 3 receptor CSF2RB and recruits SYK in response to IL3 stimulation; this interaction is direct. Interacts with CD300LH; the interaction may be indirect. Interacts with CD300LD. Interacts with TARM1.

It is found in the cell membrane. Functionally, adapter protein containing an immunoreceptor tyrosine-based activation motif (ITAM) that transduces activation signals from various immunoreceptors. As a component of the high-affinity immunoglobulin E (IgE) receptor, mediates allergic inflammatory signaling in mast cells. As a constitutive component of interleukin-3 receptor complex, selectively mediates interleukin 4/IL4 production b basophils priming T-cells toward effector T-helper 2 subset. Associates with pattern recognition receptors CLEC4D and CLEC4E to form a functional signaling complex in myeloid cells. Binding of mycobacterial trehalose 6,6'-dimycolate (TDM) to this receptor complex leads to phosphorylation of ITAM, triggering activation of SYK, CARD9 and NF-kappa-B, consequently driving maturation of antigen-presenting cells and shaping antigen-specific priming of T-cells toward effector T-helper 1 and T-helper 17 cell subtypes. May function cooperatively with other activating receptors. Functionally linked to integrin beta-2/ITGB2-mediated neutrophil activation. Also involved in integrin alpha-2/ITGA2-mediated platelet activation. The polypeptide is High affinity immunoglobulin epsilon receptor subunit gamma (FCER1G) (Sus scrofa (Pig)).